The following is a 661-amino-acid chain: UvrABC system protein B (661 aa).

A Helicase ATP-binding domain is found at 26–413; the sequence is KGINEGRKHQ…TPEMVEQIIR (388 aa). 39 to 46 is a binding site for ATP; the sequence is GATGTGKT. The Beta-hairpin motif lies at 92 to 115; it reads YYDYYQPEAYVPQTDTFIEKDASI. The 167-residue stretch at 430 to 596 folds into the Helicase C-terminal domain; the sequence is QIDDLIGEIQ…TINKKIRDVI (167 aa). Positions 625-660 constitute a UVR domain; it reads EKVIAQMESDMKEAAKALDFERAAELRDLLLELKSE.

Belongs to the UvrB family. As to quaternary structure, forms a heterotetramer with UvrA during the search for lesions. Interacts with UvrC in an incision complex.

Its subcellular location is the cytoplasm. The UvrABC repair system catalyzes the recognition and processing of DNA lesions. A damage recognition complex composed of 2 UvrA and 2 UvrB subunits scans DNA for abnormalities. Upon binding of the UvrA(2)B(2) complex to a putative damaged site, the DNA wraps around one UvrB monomer. DNA wrap is dependent on ATP binding by UvrB and probably causes local melting of the DNA helix, facilitating insertion of UvrB beta-hairpin between the DNA strands. Then UvrB probes one DNA strand for the presence of a lesion. If a lesion is found the UvrA subunits dissociate and the UvrB-DNA preincision complex is formed. This complex is subsequently bound by UvrC and the second UvrB is released. If no lesion is found, the DNA wraps around the other UvrB subunit that will check the other stand for damage. The polypeptide is UvrABC system protein B (Bacillus licheniformis (strain ATCC 14580 / DSM 13 / JCM 2505 / CCUG 7422 / NBRC 12200 / NCIMB 9375 / NCTC 10341 / NRRL NRS-1264 / Gibson 46)).